Here is a 432-residue protein sequence, read N- to C-terminus: Homeobox protein Hox-D3 (432 aa).

Disordered regions lie at residues 43–62 (YSTPHQPYPPPAAASSLDTD), 68–197 (CSIQ…SKRV), 253–280 (QKAKGILHSPASQSPERSPPLGGAAGHV), and 400–432 (HHGPCDPHPTYTDLSAHHSSQGRLPEAPKLTHL). The span at 97 to 106 (NSQGGGGGSQ) shows a compositional bias: gly residues. Pro residues predominate over residues 116–131 (PPQPPPPPPTLPPSSP). Residues 148-158 (NASSSSATISK) are compositionally biased toward polar residues. Residues 160-165 (IFPWMK) carry the Antp-type hexapeptide motif. Residues 194–253 (SKRVRTAYTSAQLVELEKEFHFNRYLCRPRRVEMANLLNLTERQIKIWFQNRRMKYKKDQ) constitute a DNA-binding region (homeobox).

This sequence belongs to the Antp homeobox family.

It is found in the nucleus. Sequence-specific transcription factor which is part of a developmental regulatory system that provides cells with specific positional identities on the anterior-posterior axis. The chain is Homeobox protein Hox-D3 (HOXD3) from Homo sapiens (Human).